The primary structure comprises 467 residues: ATP synthase subunit beta (467 aa).

154 to 161 (GGAGVGKT) contributes to the ATP binding site.

This sequence belongs to the ATPase alpha/beta chains family. As to quaternary structure, F-type ATPases have 2 components, CF(1) - the catalytic core - and CF(0) - the membrane proton channel. CF(1) has five subunits: alpha(3), beta(3), gamma(1), delta(1), epsilon(1). CF(0) has three main subunits: a(1), b(2) and c(9-12). The alpha and beta chains form an alternating ring which encloses part of the gamma chain. CF(1) is attached to CF(0) by a central stalk formed by the gamma and epsilon chains, while a peripheral stalk is formed by the delta and b chains.

It localises to the cell inner membrane. The enzyme catalyses ATP + H2O + 4 H(+)(in) = ADP + phosphate + 5 H(+)(out). Its function is as follows. Produces ATP from ADP in the presence of a proton gradient across the membrane. The catalytic sites are hosted primarily by the beta subunits. The chain is ATP synthase subunit beta from Petrotoga mobilis (strain DSM 10674 / SJ95).